We begin with the raw amino-acid sequence, 383 residues long: Ribosomal RNA large subunit methyltransferase G (383 aa).

It belongs to the methyltransferase superfamily. RlmG family.

Its subcellular location is the cytoplasm. The catalysed reaction is guanosine(1835) in 23S rRNA + S-adenosyl-L-methionine = N(2)-methylguanosine(1835) in 23S rRNA + S-adenosyl-L-homocysteine + H(+). Functionally, specifically methylates the guanine in position 1835 (m2G1835) of 23S rRNA. In Vibrio atlanticus (strain LGP32) (Vibrio splendidus (strain Mel32)), this protein is Ribosomal RNA large subunit methyltransferase G.